The following is a 1066-amino-acid chain: Pumilio homolog 2 (1066 aa).

An interaction with SNAPIN region spans residues 1–260 (MNHDFQALAL…TVGLFDYNSQ (260 aa)). A phosphoserine mark is found at Ser67, Ser70, Ser82, and Ser102. Disordered regions lie at residues 106 to 203 (KLDS…GPLP), 368 to 408 (TANQ…AESL), and 490 to 551 (TGST…SASL). Basic and acidic residues predominate over residues 119–133 (RDAETDGPEKGDQKG). Phosphoserine occurs at positions 136, 177, and 181. Thr183 bears the Phosphothreonine mark. The span at 368–383 (TANQQAASQAQPGQQQ) shows a compositional bias: low complexity. Polar residues predominate over residues 394-406 (ITPSQGQQGQQAE). Position 395 is a phosphothreonine (Thr395). The segment covering 503 to 514 (QPPQQQQQQQQP) has biased composition (low complexity). A compositionally biased stretch (polar residues) spans 515 to 525 (STNLQSNSFYG). Residues 526–540 (SSSLTNSSQSSSLFS) are compositionally biased toward low complexity. Phosphoserine is present on residues Ser587 and Ser592. Residues 620–650 (SPIGMPLPSQTPGHSLTPPPSLSSHGSSSSL) form a disordered region. A compositionally biased stretch (low complexity) spans 630–650 (TPGHSLTPPPSLSSHGSSSSL). Residue Arg674 is modified to Omega-N-methylarginine. 2 positions are modified to phosphoserine: Ser684 and Ser700. In terms of domain architecture, PUM-HD spans 706-1048 (GRSRLLEDFR…HILAKLEKYY (343 aa)). Pumilio repeat units lie at residues 726–761 (DLIG…IVFN), 762–797 (EILQ…ALAT), 798–835 (RIRG…EMVK), 836–871 (ELDG…FIID), 872–907 (AFKG…PILE), 908–943 (ELHQ…KIVS), 944–979 (EIRG…LLID), and 980–1022 (EVCC…IIMH). The adenine-nucleotide binding in RNA target stretch occupies residues 741-745 (SRFIQ). Residues 777–781 (NYVIQ) form a uracil-nucleotide binding in RNA target region. The adenine-nucleotide binding in RNA target stretch occupies residues 813–817 (CRVIQ). The tract at residues 851–855 (NHVVQ) is non-specific-nucleotide binding in RNA target. An adenine-nucleotide binding in RNA target region spans residues 887 to 891 (CRVIQ). Positions 923 to 927 (NYVIQ) are uracil-nucleotide binding in RNA target. Positions 959–963 (SNVVE) are guanine-nucleotide binding in RNA target. The tract at residues 1002 to 1006 (NYVVQ) is uracil-nucleotide binding in RNA target.

Homodimer; homodimerizes in vitro. Interacts with DAZ1, DAZL and NANOS1 via its pumilio repeats. Interacts with NANOS3. Interacts with SNAPIN. Recruits the CCR4-POP2-NOT deadenylase leading to translational inhibition and mRNA degradation. Interacts with DDX20. In case of viral infection, interacts with DHX58. Widely expressed. Expressed in embryonic stem cells, heart, kidney, lung, skin, intestine, spleen and thymus. Expressed at intermediate level in brain and liver. Weakly or not expressed in muscles and stomach. Expressed at various stages of myeloid and lymphoid cell development. In the testis expressed in the spermatogoni, spermatocytes, spermatids and Sertoli cells.

It is found in the cytoplasm. Its subcellular location is the cytoplasmic granule. The protein resides in the perinuclear region. Sequence-specific RNA-binding protein that acts as a post-transcriptional repressor by binding the 3'-UTR of mRNA targets. Binds to an RNA consensus sequence, the Pumilio Response Element (PRE), 5'-UGUANAUA-3', that is related to the Nanos Response Element (NRE). Mediates post-transcriptional repression of transcripts via different mechanisms: acts via direct recruitment of the CCR4-POP2-NOT deadenylase leading to translational inhibition and mRNA degradation. Also mediates deadenylation-independent repression by promoting accessibility of miRNAs. Acts as a post-transcriptional repressor of E2F3 mRNAs by binding to its 3'-UTR and facilitating miRNA regulation. Plays a role in cytoplasmic sensing of viral infection. Represses a program of genes necessary to maintain genomic stability such as key mitotic, DNA repair and DNA replication factors. Its ability to repress those target mRNAs is regulated by the lncRNA NORAD (non-coding RNA activated by DNA damage) which, due to its high abundance and multitude of PUMILIO binding sites, is able to sequester a significant fraction of PUM1 and PUM2 in the cytoplasm. May regulate DCUN1D3 mRNA levels. May support proliferation and self-renewal of stem cells. Binds specifically to miRNA MIR199A precursor, with PUM1, regulates miRNA MIR199A expression at a postranscriptional level. The polypeptide is Pumilio homolog 2 (Pum2) (Mus musculus (Mouse)).